Here is a 53-residue protein sequence, read N- to C-terminus: Metallothionein (53 aa).

Residues 1-6 (MRVIRM) constitute a propeptide that is removed on maturation. Cu(+) is bound by residues cysteine 17, histidine 19, cysteine 22, cysteine 24, cysteine 32, histidine 33, cysteine 34, cysteine 43, and cysteine 45.

It belongs to the metallothionein superfamily.

Metallothioneins are small proteins that have a high content of cysteine residues which allow them to bind heavy metal ions through clusters of thiolate bonds. MymT binds up to seven ions of Cu(+), with a preference for four to six Cu(+) ions, in a solvent-shielded core. MymT protects M.tuberculosis from copper toxicity. This Mycobacterium tuberculosis (strain CDC 1551 / Oshkosh) protein is Metallothionein (mymT).